Here is a 452-residue protein sequence, read N- to C-terminus: tRNA modification GTPase MnmE (452 aa).

3 residues coordinate (6S)-5-formyl-5,6,7,8-tetrahydrofolate: Arg-25, Glu-82, and Arg-125. The TrmE-type G domain occupies 221–374; sequence GLHVVLAGKP…LRARLLALAG (154 aa). Asn-231 provides a ligand contact to K(+). GTP contacts are provided by residues 231–236, 250–256, 275–278, and 355–357; these read NVGKSS, TPIAGTT, DTAG, and SAR. Ser-235 is a binding site for Mg(2+). Positions 250, 252, and 255 each coordinate K(+). Mg(2+) is bound at residue Thr-256. Lys-452 contributes to the (6S)-5-formyl-5,6,7,8-tetrahydrofolate binding site.

This sequence belongs to the TRAFAC class TrmE-Era-EngA-EngB-Septin-like GTPase superfamily. TrmE GTPase family. As to quaternary structure, homodimer. Heterotetramer of two MnmE and two MnmG subunits. It depends on K(+) as a cofactor.

Its subcellular location is the cytoplasm. Its function is as follows. Exhibits a very high intrinsic GTPase hydrolysis rate. Involved in the addition of a carboxymethylaminomethyl (cmnm) group at the wobble position (U34) of certain tRNAs, forming tRNA-cmnm(5)s(2)U34. The chain is tRNA modification GTPase MnmE from Bordetella petrii (strain ATCC BAA-461 / DSM 12804 / CCUG 43448).